We begin with the raw amino-acid sequence, 186 residues long: ATP-dependent protease subunit HslV (186 aa).

Thr14 is an active-site residue. Residues Ala168, Cys171, and Thr174 each contribute to the Na(+) site.

The protein belongs to the peptidase T1B family. HslV subfamily. In terms of assembly, a double ring-shaped homohexamer of HslV is capped on each side by a ring-shaped HslU homohexamer. The assembly of the HslU/HslV complex is dependent on binding of ATP.

Its subcellular location is the cytoplasm. The enzyme catalyses ATP-dependent cleavage of peptide bonds with broad specificity.. Its activity is regulated as follows. Allosterically activated by HslU binding. In terms of biological role, protease subunit of a proteasome-like degradation complex believed to be a general protein degrading machinery. This Bradyrhizobium diazoefficiens (strain JCM 10833 / BCRC 13528 / IAM 13628 / NBRC 14792 / USDA 110) protein is ATP-dependent protease subunit HslV.